The chain runs to 93 residues: Putative regulatory protein Cthe_1316 (93 aa).

The segment at 74 to 93 is disordered; the sequence is RLNTKEAEDVEVDDEEEIDE. Residues 81 to 93 are compositionally biased toward acidic residues; the sequence is EDVEVDDEEEIDE.

It belongs to the RemA family.

The polypeptide is Putative regulatory protein Cthe_1316 (Acetivibrio thermocellus (strain ATCC 27405 / DSM 1237 / JCM 9322 / NBRC 103400 / NCIMB 10682 / NRRL B-4536 / VPI 7372) (Clostridium thermocellum)).